Here is a 637-residue protein sequence, read N- to C-terminus: Extracellular metalloproteinase 10 (637 aa).

The first 19 residues, 1 to 19 (MHGLLLAATLLSLPFNAVA), serve as a signal peptide directing secretion. Residues 20-245 (HVPPTTGLVR…VHNVVDYVAH (226 aa)) constitute a propeptide that is removed on maturation. Residue asparagine 282 is glycosylated (N-linked (GlcNAc...) asparagine). Histidine 429 contacts Zn(2+). Glutamate 430 is a catalytic residue. A Zn(2+)-binding site is contributed by histidine 433. A glycan (N-linked (GlcNAc...) asparagine) is linked at asparagine 502.

This sequence belongs to the peptidase M36 family. It depends on Zn(2+) as a cofactor.

It localises to the secreted. Functionally, secreted metalloproteinase that allows assimilation of proteinaceous substrates. The polypeptide is Extracellular metalloproteinase 10 (MEP10) (Uncinocarpus reesii (strain UAMH 1704)).